A 455-amino-acid chain; its full sequence is Chromosomal replication initiator protein DnaA (455 aa).

The segment at 1-74 is domain I, interacts with DnaA modulators; sequence MFDIEKFWQH…IQSAYGYAGI (74 aa). A domain II region spans residues 74–117; sequence IEILPVFQINENNDSPERIVTPEPRYAIQLQQEKRAHKQFTKNL. Residues 118-334 are domain III, AAA+ region; that stretch reads KLNEKYTFDN…GALVKVQAYA (217 aa). ATP is bound by residues Gly162, Gly164, Lys165, and Thr166. Residues 335–455 are domain IV, binds dsDNA; it reads TIERADINVN…VFDLKQMIEH (121 aa).

Belongs to the DnaA family. In terms of assembly, oligomerizes as a right-handed, spiral filament on DNA at oriC.

Its subcellular location is the cytoplasm. In terms of biological role, plays an essential role in the initiation and regulation of chromosomal replication. ATP-DnaA binds to the origin of replication (oriC) to initiate formation of the DNA replication initiation complex once per cell cycle. Binds the DnaA box (a 9 base pair repeat at the origin) and separates the double-stranded (ds)DNA. Forms a right-handed helical filament on oriC DNA; dsDNA binds to the exterior of the filament while single-stranded (ss)DNA is stabiized in the filament's interior. The ATP-DnaA-oriC complex binds and stabilizes one strand of the AT-rich DNA unwinding element (DUE), permitting loading of DNA polymerase. After initiation quickly degrades to an ADP-DnaA complex that is not apt for DNA replication. Binds acidic phospholipids. The protein is Chromosomal replication initiator protein DnaA of Lactobacillus helveticus (strain DPC 4571).